A 309-amino-acid polypeptide reads, in one-letter code: Probable pathogenesis-related protein ARB_02861 (309 aa).

Residues 1–17 (MKSSVLMTALCVAGSLA) form the signal peptide. A compositionally biased stretch (low complexity) spans 47-59 (CPTVIPTTSYKPE). The segment at 47 to 152 (CPTVIPTTSY…PPPPGKDYKE (106 aa)) is disordered. Composition is skewed to pro residues over residues 61–92 (TSKP…PCPE) and 99–147 (APPP…PPPG). In terms of domain architecture, SCP spans 154–284 (AGYHHNVHRS…GDAYYTVCNY (131 aa)). N164 carries N-linked (GlcNAc...) asparagine glycosylation.

The protein belongs to the CRISP family.

Its subcellular location is the secreted. In terms of biological role, secreted protein required for efficient export of lipids such as acetylated sterols. Acts in detoxification of hydrophobic compounds. This is Probable pathogenesis-related protein ARB_02861 from Arthroderma benhamiae (strain ATCC MYA-4681 / CBS 112371) (Trichophyton mentagrophytes).